Here is a 196-residue protein sequence, read N- to C-terminus: Imidazole glycerol phosphate synthase subunit HisH (196 aa).

In terms of domain architecture, Glutamine amidotransferase type-1 spans 2-196 (KIIIINTNCS…EQLIKNFLEI (195 aa)). The Nucleophile role is filled by Cys77. Active-site residues include His178 and Glu180.

In terms of assembly, heterodimer of HisH and HisF.

It localises to the cytoplasm. It carries out the reaction 5-[(5-phospho-1-deoxy-D-ribulos-1-ylimino)methylamino]-1-(5-phospho-beta-D-ribosyl)imidazole-4-carboxamide + L-glutamine = D-erythro-1-(imidazol-4-yl)glycerol 3-phosphate + 5-amino-1-(5-phospho-beta-D-ribosyl)imidazole-4-carboxamide + L-glutamate + H(+). The catalysed reaction is L-glutamine + H2O = L-glutamate + NH4(+). It functions in the pathway amino-acid biosynthesis; L-histidine biosynthesis; L-histidine from 5-phospho-alpha-D-ribose 1-diphosphate: step 5/9. Its function is as follows. IGPS catalyzes the conversion of PRFAR and glutamine to IGP, AICAR and glutamate. The HisH subunit catalyzes the hydrolysis of glutamine to glutamate and ammonia as part of the synthesis of IGP and AICAR. The resulting ammonia molecule is channeled to the active site of HisF. The protein is Imidazole glycerol phosphate synthase subunit HisH of Blochmanniella floridana.